The chain runs to 143 residues: Small ribosomal subunit protein uS12 (143 aa).

The span at 1–19 shows a compositional bias: basic residues; sequence MGKPRGLRTARKHVNHRRD. The tract at residues 1–23 is disordered; sequence MGKPRGLRTARKHVNHRRDQRWA. A 3-hydroxyproline modification is found at proline 62.

Belongs to the universal ribosomal protein uS12 family. In terms of assembly, component of the 40S small ribosomal subunit. Hydroxylation at Pro-62 affects translation termination efficiency.

The protein resides in the cytoplasm. It is found in the cytosol. The protein localises to the rough endoplasmic reticulum. The chain is Small ribosomal subunit protein uS12 (RpS23) from Drosophila melanogaster (Fruit fly).